The following is a 384-amino-acid chain: Dual-specificity RNA methyltransferase RlmN (384 aa).

Glu-93 functions as the Proton acceptor in the catalytic mechanism. One can recognise a Radical SAM core domain in the interval 99-339 (EETRGTLCVS…TTIRKTRGDD (241 aa)). A disulfide bridge connects residues Cys-106 and Cys-344. 3 residues coordinate [4Fe-4S] cluster: Cys-113, Cys-117, and Cys-120. Residues 170-171 (GE), Ser-202, 224-226 (SLH), and Asn-301 each bind S-adenosyl-L-methionine. The active-site S-methylcysteine intermediate is Cys-344.

This sequence belongs to the radical SAM superfamily. RlmN family. The cofactor is [4Fe-4S] cluster.

It localises to the cytoplasm. It carries out the reaction adenosine(2503) in 23S rRNA + 2 reduced [2Fe-2S]-[ferredoxin] + 2 S-adenosyl-L-methionine = 2-methyladenosine(2503) in 23S rRNA + 5'-deoxyadenosine + L-methionine + 2 oxidized [2Fe-2S]-[ferredoxin] + S-adenosyl-L-homocysteine. The enzyme catalyses adenosine(37) in tRNA + 2 reduced [2Fe-2S]-[ferredoxin] + 2 S-adenosyl-L-methionine = 2-methyladenosine(37) in tRNA + 5'-deoxyadenosine + L-methionine + 2 oxidized [2Fe-2S]-[ferredoxin] + S-adenosyl-L-homocysteine. In terms of biological role, specifically methylates position 2 of adenine 2503 in 23S rRNA and position 2 of adenine 37 in tRNAs. m2A2503 modification seems to play a crucial role in the proofreading step occurring at the peptidyl transferase center and thus would serve to optimize ribosomal fidelity. In Cupriavidus pinatubonensis (strain JMP 134 / LMG 1197) (Cupriavidus necator (strain JMP 134)), this protein is Dual-specificity RNA methyltransferase RlmN.